A 272-amino-acid chain; its full sequence is Ribosomal RNA small subunit methyltransferase A (272 aa).

Residues N18, L20, G45, E66, D91, and N113 each coordinate S-adenosyl-L-methionine.

Belongs to the class I-like SAM-binding methyltransferase superfamily. rRNA adenine N(6)-methyltransferase family. RsmA subfamily.

Its subcellular location is the cytoplasm. It carries out the reaction adenosine(1518)/adenosine(1519) in 16S rRNA + 4 S-adenosyl-L-methionine = N(6)-dimethyladenosine(1518)/N(6)-dimethyladenosine(1519) in 16S rRNA + 4 S-adenosyl-L-homocysteine + 4 H(+). Its function is as follows. Specifically dimethylates two adjacent adenosines (A1518 and A1519) in the loop of a conserved hairpin near the 3'-end of 16S rRNA in the 30S particle. May play a critical role in biogenesis of 30S subunits. This chain is Ribosomal RNA small subunit methyltransferase A, found in Yersinia enterocolitica serotype O:8 / biotype 1B (strain NCTC 13174 / 8081).